Here is a 679-residue protein sequence, read N- to C-terminus: MTRRLLVTAALPYANGPIHIGHLVEYLQTDIWVRFQKLRGNRCLYICADDTHGTAIMIRARGEGRSEIELIEETSEAHQRDFAGFGIEFDHYGSTNSEENRTLCHQIWKSLRDADLVVERSVEQLYDPEAETFLADRFVRGTCPKCGTPNQAGDNCNCGHTYSPTELIDPVSTLSGATPIIKEAEHLFVELEKLHDFLSEWVSNSGALQPETANYLKGHFLADELRDWDISRPAPYFGFEIPDAPGNYWYVWFDAPIGYIASTQQWCDANGEDLADWWKSDDCEVHHFIGKDITYFHTLFWPGMLKTAGFSLPTKVHIHGFLNVNGKKMSKSDGTFVKAETFLKHIDPSALRYFYATKLSSRVEDLDLGVDEFVEKVNSDLVGKVVNLASRVGKFASRTGLAPSYPEDGGLFQAAAAKGDEIASAYEDGEFSKAMRLIMELADAANPFVEHAKPWEMNKAPERQDELRDVCTVALNLFRQLAVYLAPVLPELAKKCGDLLGEPITSWEQSQTPLVDRGVNKFQRMMDRVKTEDLEAMMEESKDEAAQETGAAATNPFNDSDQPLKDEPLADEITIDDFMKVDLRVARVLSAEHVPEANKLLKLTLGLGGDETRQVFAGIKAAYDPEKLVGRLVVMVANLKPRKMRFGLSEGMVTAAGPGGEEVFVLGIDEGALPGQRVH.

A 'HIGH' region motif is present at residues 12–22 (PYANGPIHIGH). Residues Cys143, Cys146, Cys156, and Cys158 each coordinate Zn(2+). Residues 328–332 (KMSKS) carry the 'KMSKS' region motif. Lys331 contributes to the ATP binding site. The segment at 537 to 564 (MMEESKDEAAQETGAAATNPFNDSDQPL) is disordered. Positions 577–679 (DFMKVDLRVA…EGALPGQRVH (103 aa)) constitute a tRNA-binding domain.

Belongs to the class-I aminoacyl-tRNA synthetase family. MetG type 1 subfamily. In terms of assembly, homodimer. The cofactor is Zn(2+).

The protein localises to the cytoplasm. The catalysed reaction is tRNA(Met) + L-methionine + ATP = L-methionyl-tRNA(Met) + AMP + diphosphate. In terms of biological role, is required not only for elongation of protein synthesis but also for the initiation of all mRNA translation through initiator tRNA(fMet) aminoacylation. The chain is Methionine--tRNA ligase from Rhodopirellula baltica (strain DSM 10527 / NCIMB 13988 / SH1).